The chain runs to 252 residues: MAVISMKQLLEAGVHFGHQTRRWNPKMAEYIFTERNGIYIIDLQKTVKKVDDAYFFIREIAMNGQDVLFVGTKKQAQDSIREEAERSGQFFVNNRWLGGMLTNFKTITKRINRLHQLNAMETDGTFEVLPKKEVSKLKKEMADLEKNLGGIKNMKKLPGAMFVVDPRKERNAILEAKRLGIPVVAIVDTNCDPDEVDFVIPGNDDAIRAVKLIAAKMADAVIEGRQGEQLAETPVETAEVAEEAQVAVEAAE.

It belongs to the universal ribosomal protein uS2 family.

The protein is Small ribosomal subunit protein uS2 of Ruminiclostridium cellulolyticum (strain ATCC 35319 / DSM 5812 / JCM 6584 / H10) (Clostridium cellulolyticum).